The sequence spans 340 residues: L-threonine 3-dehydrogenase (340 aa).

Residue cysteine 38 coordinates Zn(2+). Residues threonine 40 and histidine 43 each act as charge relay system in the active site. Residues histidine 63, glutamate 64, cysteine 93, cysteine 96, cysteine 99, and cysteine 107 each contribute to the Zn(2+) site. Residues isoleucine 175, aspartate 195, arginine 200, 261 to 263 (LGI), and 285 to 286 (IY) each bind NAD(+).

The protein belongs to the zinc-containing alcohol dehydrogenase family. In terms of assembly, homotetramer. It depends on Zn(2+) as a cofactor.

It localises to the cytoplasm. It catalyses the reaction L-threonine + NAD(+) = (2S)-2-amino-3-oxobutanoate + NADH + H(+). It functions in the pathway amino-acid degradation; L-threonine degradation via oxydo-reductase pathway; glycine from L-threonine: step 1/2. Its function is as follows. Catalyzes the NAD(+)-dependent oxidation of L-threonine to 2-amino-3-ketobutyrate. The polypeptide is L-threonine 3-dehydrogenase (Xanthomonas campestris pv. campestris (strain ATCC 33913 / DSM 3586 / NCPPB 528 / LMG 568 / P 25)).